A 217-amino-acid polypeptide reads, in one-letter code: UDP-N-acetylglucosamine transferase subunit ALG14 (217 aa).

Residues 1–3 (MLS) are Lumenal-facing. The helical transmembrane segment at 4–26 (ILILAATAAGLVILLFQRLWTVL) threads the bilayer. The Cytoplasmic portion of the chain corresponds to 27 to 217 (GPHHVTPRES…PKSVYLGRIV (191 aa)).

It belongs to the ALG14 family. Forms with ALG13 the active heterodimeric UDP-N-acetylglucosamine transferase complex.

It localises to the endoplasmic reticulum membrane. Part of the UDP-N-acetylglucosamine transferase complex that operates in the biosynthetic pathway of dolichol-linked oligosaccharides, the glycan precursors employed in protein asparagine (N)-glycosylation. The assembly of dolichol-linked oligosaccharides begins on the cytosolic side of the endoplasmic reticulum membrane and finishes in its lumen. The sequential addition of sugars to dolichol pyrophosphate produces dolichol-linked oligosaccharides containing fourteen sugars, including two GlcNAcs, nine mannoses and three glucoses. Once assembled, the oligosaccharides are transferred from the lipid to nascent proteins by oligosaccharyltransferases. Functions as a protein-membrane adapter recruiting ALG13 at the cytoplasmic face of the endoplasmic reticulum, where the complex catalyzes the second step of dolichol pyrophosphate biosynthesis, transferring a beta1,4-linked N-acetylglucosamine (GlcNAc) from UDP-GlcNAc to GlcNAc-pyrophosphatedolichol (Gn-PDol) to produce N,N'-diacetylchitobiosyl diphosphodolichol. N,N'-diacetylchitobiosyl diphosphodolichol is a substrate for ALG1, the following enzyme in the biosynthetic pathway. This is UDP-N-acetylglucosamine transferase subunit ALG14 from Mus musculus (Mouse).